A 679-amino-acid chain; its full sequence is Protein hook (679 aa).

The region spanning 6 to 123 is the Calponin-homology (CH) domain; it reads NEMYYSLLEW…RLLQLVLGCA (118 aa). Coiled-coil stretches lie at residues 135 to 437 and 480 to 574; these read EIMC…LKCG and QTAL…QEIL.

Belongs to the hook family. In terms of assembly, homodimer. Interacts with microtubules via its N-terminus.

Its subcellular location is the cytoplasm. The protein resides in the cytoskeleton. It localises to the endosome. The protein localises to the synapse. Its function is as follows. Involved in endocytic trafficking by stabilizing organelles of the endocytic pathway. Probably acts as a cytoskeletal linker protein required to tether endosome vesicles to the cytoskeleton. Involved in modulation of endocytosis at stages required for down-regulation of membrane proteins that control synapse size. Not involved in synaptic vesicle recycling. Required in R7 cells for boss endocytosis into multivesicular bodies (MVBs). Has a role in regulating adult longevity. This is Protein hook from Drosophila erecta (Fruit fly).